A 512-amino-acid polypeptide reads, in one-letter code: Bifunctional purine biosynthesis protein PurH (512 aa).

The MGS-like domain occupies 1–144; sequence MKRALVSVSD…KNYRDVVVVV (144 aa).

It belongs to the PurH family.

It carries out the reaction (6R)-10-formyltetrahydrofolate + 5-amino-1-(5-phospho-beta-D-ribosyl)imidazole-4-carboxamide = 5-formamido-1-(5-phospho-D-ribosyl)imidazole-4-carboxamide + (6S)-5,6,7,8-tetrahydrofolate. The catalysed reaction is IMP + H2O = 5-formamido-1-(5-phospho-D-ribosyl)imidazole-4-carboxamide. Its pathway is purine metabolism; IMP biosynthesis via de novo pathway; 5-formamido-1-(5-phospho-D-ribosyl)imidazole-4-carboxamide from 5-amino-1-(5-phospho-D-ribosyl)imidazole-4-carboxamide (10-formyl THF route): step 1/1. It functions in the pathway purine metabolism; IMP biosynthesis via de novo pathway; IMP from 5-formamido-1-(5-phospho-D-ribosyl)imidazole-4-carboxamide: step 1/1. This is Bifunctional purine biosynthesis protein PurH from Ligilactobacillus salivarius (strain UCC118) (Lactobacillus salivarius).